The sequence spans 238 residues: Cell division protein A (238 aa).

As to quaternary structure, interacts with CdvB.

Its subcellular location is the cytoplasm. It localises to the nucleoid. The protein localises to the cell membrane. Part of a cell division machinery. The CdvA, CdvB and CdvC proteins polymerize between segregating nucleoids and persist throughout cell division, forming a successively smaller structure during constriction. CdvA is a membrane interacting protein that recruits ESCRT-III homologs to the membrane. This chain is Cell division protein A, found in Sulfolobus acidocaldarius (strain ATCC 33909 / DSM 639 / JCM 8929 / NBRC 15157 / NCIMB 11770).